Consider the following 307-residue polypeptide: Protoheme IX farnesyltransferase (307 aa).

9 helical membrane-spanning segments follow: residues 33 to 53, 62 to 82, 111 to 131, 132 to 152, 159 to 179, 185 to 205, 229 to 249, 251 to 271, and 287 to 307; these read IGIVNSNLITTFAGMWLAFYF, LHIVFFTLFGAALVIAGSCSI, RVLWLGVTLVAIGTMSLLMTT, VTAAIVGLIGVVTYVFLYTLW, LNTVVGSISGAVPPVIGWTAV, IVPLILFLIMFLWQPPHFLAL, MTKRQIIVWVACLLPLPFYLF, LGIPFLIVATVLNVGWLLLGL, and FVYSLNYLTILFVAMVIATIW.

The protein belongs to the UbiA prenyltransferase family. Protoheme IX farnesyltransferase subfamily. As to quaternary structure, interacts with CtaA.

Its subcellular location is the cell membrane. It catalyses the reaction heme b + (2E,6E)-farnesyl diphosphate + H2O = Fe(II)-heme o + diphosphate. The protein operates within porphyrin-containing compound metabolism; heme O biosynthesis; heme O from protoheme: step 1/1. Converts heme B (protoheme IX) to heme O by substitution of the vinyl group on carbon 2 of heme B porphyrin ring with a hydroxyethyl farnesyl side group. The chain is Protoheme IX farnesyltransferase from Geobacillus thermodenitrificans (strain NG80-2).